Consider the following 156-residue polypeptide: ATP synthase subunit b (156 aa).

The chain crosses the membrane as a helical span at residues 12 to 32 (IAFAIFVLFCMKFIWPALMGA).

This sequence belongs to the ATPase B chain family. As to quaternary structure, F-type ATPases have 2 components, F(1) - the catalytic core - and F(0) - the membrane proton channel. F(1) has five subunits: alpha(3), beta(3), gamma(1), delta(1), epsilon(1). F(0) has three main subunits: a(1), b(2) and c(10-14). The alpha and beta chains form an alternating ring which encloses part of the gamma chain. F(1) is attached to F(0) by a central stalk formed by the gamma and epsilon chains, while a peripheral stalk is formed by the delta and b chains.

It localises to the cell inner membrane. In terms of biological role, f(1)F(0) ATP synthase produces ATP from ADP in the presence of a proton or sodium gradient. F-type ATPases consist of two structural domains, F(1) containing the extramembraneous catalytic core and F(0) containing the membrane proton channel, linked together by a central stalk and a peripheral stalk. During catalysis, ATP synthesis in the catalytic domain of F(1) is coupled via a rotary mechanism of the central stalk subunits to proton translocation. Its function is as follows. Component of the F(0) channel, it forms part of the peripheral stalk, linking F(1) to F(0). This chain is ATP synthase subunit b, found in Psychrobacter sp. (strain PRwf-1).